Reading from the N-terminus, the 158-residue chain is Cyclic pyranopterin monophosphate synthase (158 aa).

Substrate contacts are provided by residues 74–76 and 112–113; these read MCH and ME. Asp-127 is an active-site residue.

This sequence belongs to the MoaC family. In terms of assembly, homohexamer; trimer of dimers.

The enzyme catalyses (8S)-3',8-cyclo-7,8-dihydroguanosine 5'-triphosphate = cyclic pyranopterin phosphate + diphosphate. It participates in cofactor biosynthesis; molybdopterin biosynthesis. Functionally, catalyzes the conversion of (8S)-3',8-cyclo-7,8-dihydroguanosine 5'-triphosphate to cyclic pyranopterin monophosphate (cPMP). The sequence is that of Cyclic pyranopterin monophosphate synthase from Helicobacter pylori (strain J99 / ATCC 700824) (Campylobacter pylori J99).